We begin with the raw amino-acid sequence, 176 residues long: Ubiquitin-conjugating enzyme E2-20 kDa (176 aa).

The span at 1-20 shows a compositional bias: polar residues; that stretch reads MDSDMQNQNPHTNSKNSSSA. The tract at residues 1–25 is disordered; that stretch reads MDSDMQNQNPHTNSKNSSSAGMAVD. The region spanning 28-175 is the UBC core domain; it reads SVTKRLRSEL…LMQRYKEIDE (148 aa). The active-site Glycyl thioester intermediate is Cys-113.

The protein belongs to the ubiquitin-conjugating enzyme family.

The enzyme catalyses S-ubiquitinyl-[E1 ubiquitin-activating enzyme]-L-cysteine + [E2 ubiquitin-conjugating enzyme]-L-cysteine = [E1 ubiquitin-activating enzyme]-L-cysteine + S-ubiquitinyl-[E2 ubiquitin-conjugating enzyme]-L-cysteine.. It participates in protein modification; protein ubiquitination. Its function is as follows. Catalyzes the covalent attachment of ubiquitin to other proteins. The polypeptide is Ubiquitin-conjugating enzyme E2-20 kDa (ubc11) (Schizosaccharomyces pombe (strain 972 / ATCC 24843) (Fission yeast)).